The sequence spans 369 residues: Flagellar P-ring protein (369 aa).

Residues 1-22 form the signal peptide; it reads MIKLKQLIAATLLLSAAFGAHA.

Belongs to the FlgI family. As to quaternary structure, the basal body constitutes a major portion of the flagellar organelle and consists of four rings (L,P,S, and M) mounted on a central rod.

It localises to the periplasm. Its subcellular location is the bacterial flagellum basal body. In terms of biological role, assembles around the rod to form the L-ring and probably protects the motor/basal body from shearing forces during rotation. This is Flagellar P-ring protein from Pseudomonas syringae pv. tomato (strain ATCC BAA-871 / DC3000).